Here is a 185-residue protein sequence, read N- to C-terminus: ATP synthase subunit delta, chloroplastic (185 aa).

Belongs to the ATPase delta chain family. As to quaternary structure, F-type ATPases have 2 components, F(1) - the catalytic core - and F(0) - the membrane proton channel. F(1) has five subunits: alpha(3), beta(3), gamma(1), delta(1), epsilon(1). CF(0) has four main subunits: a(1), b(1), b'(1) and c(10-14). The alpha and beta chains form an alternating ring which encloses part of the gamma chain. F(1) is attached to F(0) by a central stalk formed by the gamma and epsilon chains, while a peripheral stalk is formed by the delta, b and b' chains.

It localises to the plastid. The protein localises to the chloroplast thylakoid membrane. Its function is as follows. F(1)F(0) ATP synthase produces ATP from ADP in the presence of a proton or sodium gradient. F-type ATPases consist of two structural domains, F(1) containing the extramembraneous catalytic core and F(0) containing the membrane proton channel, linked together by a central stalk and a peripheral stalk. During catalysis, ATP synthesis in the catalytic domain of F(1) is coupled via a rotary mechanism of the central stalk subunits to proton translocation. Functionally, this protein is part of the stalk that links CF(0) to CF(1). It either transmits conformational changes from CF(0) to CF(1) or is implicated in proton conduction. This is ATP synthase subunit delta, chloroplastic from Gracilaria tenuistipitata var. liui (Red alga).